Consider the following 162-residue polypeptide: Large ribosomal subunit protein uL10 (162 aa).

It belongs to the universal ribosomal protein uL10 family. As to quaternary structure, part of the ribosomal stalk of the 50S ribosomal subunit. The N-terminus interacts with L11 and the large rRNA to form the base of the stalk. The C-terminus forms an elongated spine to which L12 dimers bind in a sequential fashion forming a multimeric L10(L12)X complex.

Functionally, forms part of the ribosomal stalk, playing a central role in the interaction of the ribosome with GTP-bound translation factors. In Vibrio parahaemolyticus serotype O3:K6 (strain RIMD 2210633), this protein is Large ribosomal subunit protein uL10.